The primary structure comprises 816 residues: Leucine--tRNA ligase (816 aa).

A 'HIGH' region motif is present at residues 40-51; sequence PYPSGSGLHVGH. Residues 576–580 carry the 'KMSKS' region motif; sequence KMSKS. Lys-579 contributes to the ATP binding site.

Belongs to the class-I aminoacyl-tRNA synthetase family.

It is found in the cytoplasm. The catalysed reaction is tRNA(Leu) + L-leucine + ATP = L-leucyl-tRNA(Leu) + AMP + diphosphate. The polypeptide is Leucine--tRNA ligase (Chlorobium phaeobacteroides (strain DSM 266 / SMG 266 / 2430)).